Consider the following 1519-residue polypeptide: Putative lipoprotein YghJ (1519 aa).

A signal peptide spans 1-23 (MNKKFKYKKSLLAAILSATLLAG). Disordered stretches follow at residues 22-107 (AGCD…GATC) and 226-247 (NAAT…TTPG). The N-palmitoyl cysteine moiety is linked to residue C24. C24 is lipidated: S-diacylglycerol cysteine. The segment covering 31 to 42 (SSSDTPPVDSGT) has biased composition (low complexity). Residues 51–77 (DPTPNPEPTPEPTPDPEPTPEPIPDPE) show a composition bias toward pro residues. Positions 97–107 (GGSQRVTGATC) are enriched in polar residues. Low complexity predominate over residues 234–247 (STHTSPVVPVTTPG). Residues 1080-1380 (GNMQSTGLWA…MYAQLKEWAE (301 aa)) form the Peptidase M60 domain. The interval 1497-1519 (DLPKPEQGPETINQVTEHKMSAE) is disordered.

The protein to V.cholerae AcfD (VC_0845).

The protein localises to the cell membrane. Its function is as follows. May be a substrate of the type II secretion system beta (T2SS-beta). This is Putative lipoprotein YghJ (yghJ) from Escherichia coli O78:H11 (strain H10407 / ETEC).